The chain runs to 496 residues: MFFSTNELQHKDTLAIGLFQKSQLSGKAKEMDELLEGRITELLKEGDISSKRNQLSKFFPSPETGIKRIYFVGLGKESDYTFEEAKEGFAHLFRKLHQDKKQAVSVLLDTFIGKDLPAQDAAHTLSESCLLATYELQDFKHKTNEPDRFIEFVYAMTDHDTTEIQASLKVGEVYGQSVNSARTLVNMPPNMLTSSDLASYAAELAYKYEFEIEILDKEQMEELGMGGILAVNRGSTEPPKLIVLKYQGKEEWTDVIGLVGKGITYDTGGYSLKPRASMIGMKTDMGGSASVLGAMEIIGELRPEQNVIAVIASTDNMISADAMKPDDVIVSLSGKTIEVLNTDAEGRLVLADGVTYAKQHGASVLIDVATLTGGVIVALGNETTGVMTNNDELYAQFKEASEECGEMIWQLPITEKDKKRVRNSKMADLNNSPGRDGHAIMAGAFIGEFAENTPWVHLDIAGTATTEKPSCFGPTGATGVMVRSLATFVERFEGKK.

Residues Lys-261 and Asp-266 each coordinate Mn(2+). Residue Lys-273 is part of the active site. Asp-284, Asp-343, and Glu-345 together coordinate Mn(2+). Arg-347 is an active-site residue.

The protein belongs to the peptidase M17 family. Mn(2+) is required as a cofactor.

The protein resides in the cytoplasm. The enzyme catalyses Release of an N-terminal amino acid, Xaa-|-Yaa-, in which Xaa is preferably Leu, but may be other amino acids including Pro although not Arg or Lys, and Yaa may be Pro. Amino acid amides and methyl esters are also readily hydrolyzed, but rates on arylamides are exceedingly low.. It catalyses the reaction Release of an N-terminal amino acid, preferentially leucine, but not glutamic or aspartic acids.. Presumably involved in the processing and regular turnover of intracellular proteins. Catalyzes the removal of unsubstituted N-terminal amino acids from various peptides. The protein is Probable cytosol aminopeptidase of Bacillus pumilus (strain SAFR-032).